Here is an 84-residue protein sequence, read N- to C-terminus: Sulfur carrier protein TusA (84 aa).

The active-site Cysteine persulfide intermediate is Cys-19.

This sequence belongs to the sulfur carrier protein TusA family. As to quaternary structure, interacts with IscS.

The protein localises to the cytoplasm. It functions in the pathway tRNA modification. In terms of biological role, sulfur carrier protein involved in sulfur trafficking in the cell. Part of a sulfur-relay system required for 2-thiolation during synthesis of 2-thiouridine of the modified wobble base 5-methylaminomethyl-2-thiouridine (mnm(5)s(2)U) in tRNA. Interacts with IscS and stimulates its cysteine desulfurase activity. Accepts an activated sulfur from IscS, which is then transferred to TusD, and thus determines the direction of sulfur flow from IscS to 2-thiouridine formation. Also appears to be involved in sulfur transfer for the biosynthesis of molybdopterin. The polypeptide is Sulfur carrier protein TusA (Yersinia enterocolitica serotype O:8 / biotype 1B (strain NCTC 13174 / 8081)).